The chain runs to 334 residues: Succinate receptor 1 (334 aa).

At 5-31 the chain is on the extracellular side; sequence MAWNATCKNWLAAEAALEKYYLSIFYG. The N-linked (GlcNAc...) asparagine glycan is linked to N8. Residues 32–52 form a helical membrane-spanning segment; the sequence is IEFVVGVLGNTIVVYGYIFSL. Residues 53–59 lie on the Cytoplasmic side of the membrane; sequence KNWNSSN. The chain crosses the membrane as a helical span at residues 60-80; sequence IYLFNLSVSDLAFLCTLPMLI. Topologically, residues 81–103 are extracellular; that stretch reads RSYANGNWIYGDVLCISNRYVLH. The cysteines at positions 95 and 172 are disulfide-linked. Residues 104–124 form a helical membrane-spanning segment; sequence ANLYTSILFLTFISIDRYLII. The Cytoplasmic portion of the chain corresponds to 125 to 137; that stretch reads KYPFREHLLQKKE. The chain crosses the membrane as a helical span at residues 138-158; that stretch reads FAILISLAIWVLVTLELLPIL. Residues 159-185 are Extracellular-facing; sequence PLINPVITDNGTTCNDFASSGDPNYNL. N168 carries an N-linked (GlcNAc...) asparagine glycan. Residues 186 to 206 traverse the membrane as a helical segment; the sequence is IYSMCLTLLGFLIPLFVMCFF. Residues 207–230 are Cytoplasmic-facing; sequence YYKIALFLKQRNRQVATALPLEKP. The helical transmembrane segment at 231-251 threads the bilayer; that stretch reads LNLVIMAVVIFSVLFTPYHVM. Over 252-281 the chain is Extracellular; the sequence is RNVRIASRLGSWKQYQCTQVVINSFYIVTR. Residues 282–302 form a helical membrane-spanning segment; the sequence is PLAFLNSVINPVFYFLLGDHF. Over 303-334 the chain is Cytoplasmic; sequence RDMLMNQLRHNFKSLTSFSRWAHELLLSFREK.

Belongs to the G-protein coupled receptor 1 family. As to expression, expressed specifically in kidney. Highly expressed in immature dendritic cells, expression rapidly downregulates after maturation. Also expressed in macrophages.

It is found in the cell membrane. G protein-coupled receptor for succinate able to mediate signaling through Gq/GNAQ or Gi/GNAI second messengers depending on the cell type and the processes regulated. Succinate-SUCNR1 signaling serves as a link between metabolic stress, inflammation and energy homeostasis. In macrophages, plays a range of immune-regulatory roles. During inflammation, succinate-SUCNR1 signaling may act as an anti-inflammatory mediator or boost inflammation depending on the inflammatory status of cells. Hyperpolarizes M2 macrophages versus M1 phenotype through Gq signaling by regulating the transcription of genes involved in immune function. In activated M1 macrophages, plays a pro-inflammatory role in response to LPS. Expressed in dendritic cells, where it is involved in the sensing of immunological danger and enhances immunity. Mediates succinate triggered intracelleular calcium mobilization, induces migratory responses and acts in synergy with Toll-like receptor ligands for the production of proinflammatory cytokines as well as an enhancement of antigen-specific activation of helper T cells. In the small intestine, mediates the activation of tuft cells by dietary succinate and triggers type 2 immunity. In adipocytes, plays an important role in the control of energy metabolism. In response to succinate, controls leptin expression in an AMPK-JNK-CEBPA-dependent as well as circadian clock-regulated manner. In muscle tissue, is expressed in non-muscle cells and coordinates muscle remodeling in response to the succinate produced during exercise training in a paracrine manner. In retina, acts as a mediator of vessel growth during retinal development. In response to succinate, regulates the production of angiogenic factors, including VEGF, by retinal ganglion neurons. This is Succinate receptor 1 from Homo sapiens (Human).